Here is an 87-residue protein sequence, read N- to C-terminus: UPF0250 protein ETA_23570 (87 aa).

The protein belongs to the UPF0250 family.

This is UPF0250 protein ETA_23570 from Erwinia tasmaniensis (strain DSM 17950 / CFBP 7177 / CIP 109463 / NCPPB 4357 / Et1/99).